The primary structure comprises 482 residues: BTB/POZ domain and ankyrin repeat-containing protein NOOT1 (482 aa).

The region spanning 25–107 (SDVVFSVEGR…LYSGQVSIVP (83 aa)) is the BTB domain. The C2HC NPR-type zinc finger occupies 113–127 (RPNCGDRGCWHTHCT). Residues Cys-116, Cys-121, His-123, and Cys-126 each coordinate Zn(2+). ANK repeat units lie at residues 249–278 (QKIR…LNLD), 279–308 (EALA…DVNF), 313–342 (TGKT…DPNV), and 346–380 (DGVT…KLRL). The disordered stretch occupies residues 395–434 (EEGNNNNSNNNNNATASSATNMYPHHNMNEDHHHSHNNNN). A compositionally biased stretch (low complexity) spans 398-415 (NNNNSNNNNNATASSATN).

Belongs to the plant 'ANKYRIN-BTB/POZ' family. 'NOOT-BOP-COCH-like' (NBCL) subfamily. As to quaternary structure, homodimer. Expressed in the shoot apical meristem (SAM) at the base of the developing leaf where stipules are formed. Associated with functional and vestigial abscission zones (AZs), including pulvini.

The protein resides in the nucleus. Its subcellular location is the cytoplasm. The protein localises to the cell membrane. The protein operates within protein modification; protein ubiquitination. Functionally, may act as a substrate-specific adapter of an E3 ubiquitin-protein ligase complex (CUL3-RBX1-BTB) which mediates the ubiquitination and subsequent proteasomal degradation of target proteins. Transcriptional co-regulator involved in the promotion of leaf and floral meristem fate and determinacy. Promotes normal stipule growth and development. Required for the abscission of senescent organs, probably by regulating the cell wall disorganization in abscission zones (AZs, e.g. pulvini at the base of leaves). Involved in the coordination of the symbiotic nodule developmental program. Promotes the formation of root nodules by interacting directly with APP1 to modulate the expression of the nuclear transcription factor Y subunit (NF-YA1), a key nodulin. Necessary for the robust maintenance of nodule identity throughout the nodule developmental program. Involved in the regulation of indeterminate nodule identity in association with NOOT2. In Medicago truncatula (Barrel medic), this protein is BTB/POZ domain and ankyrin repeat-containing protein NOOT1.